Consider the following 425-residue polypeptide: Serine--tRNA ligase (425 aa).

230 to 232 (TAE) serves as a coordination point for L-serine. 261 to 263 (RSE) serves as a coordination point for ATP. Position 284 (glutamate 284) interacts with L-serine. 348–351 (EISS) lines the ATP pocket. Serine 384 contributes to the L-serine binding site.

Belongs to the class-II aminoacyl-tRNA synthetase family. Type-1 seryl-tRNA synthetase subfamily. In terms of assembly, homodimer. The tRNA molecule binds across the dimer.

It localises to the cytoplasm. It catalyses the reaction tRNA(Ser) + L-serine + ATP = L-seryl-tRNA(Ser) + AMP + diphosphate + H(+). It carries out the reaction tRNA(Sec) + L-serine + ATP = L-seryl-tRNA(Sec) + AMP + diphosphate + H(+). The protein operates within aminoacyl-tRNA biosynthesis; selenocysteinyl-tRNA(Sec) biosynthesis; L-seryl-tRNA(Sec) from L-serine and tRNA(Sec): step 1/1. Functionally, catalyzes the attachment of serine to tRNA(Ser). Is also able to aminoacylate tRNA(Sec) with serine, to form the misacylated tRNA L-seryl-tRNA(Sec), which will be further converted into selenocysteinyl-tRNA(Sec). The sequence is that of Serine--tRNA ligase from Streptococcus pyogenes serotype M5 (strain Manfredo).